Reading from the N-terminus, the 139-residue chain is uncharacterized protein (139 aa).

This sequence to S.typhimurium FliF.

Its function is as follows. May be involved in the assembly, structure, or function of the flagellum. May polymerize to form a filamentous structure that is part of the flagellum. This is an uncharacterized protein from Bacillus subtilis (strain 168).